The primary structure comprises 312 residues: F-box protein At1g11270 (312 aa).

Residues 29-80 form the F-box domain; sequence SVVKLLLPHDVVGLILERLPVESLLRFKCVSNQWKSTIESQCFQERQLIRRM.

The protein is F-box protein At1g11270 of Arabidopsis thaliana (Mouse-ear cress).